We begin with the raw amino-acid sequence, 318 residues long: tRNA U34 carboxymethyltransferase (318 aa).

7 residues coordinate carboxy-S-adenosyl-L-methionine: lysine 88, tryptophan 102, lysine 107, glycine 126, methionine 192, tyrosine 196, and arginine 311.

The protein belongs to the class I-like SAM-binding methyltransferase superfamily. CmoB family. Homotetramer.

It carries out the reaction carboxy-S-adenosyl-L-methionine + 5-hydroxyuridine(34) in tRNA = 5-carboxymethoxyuridine(34) in tRNA + S-adenosyl-L-homocysteine + H(+). In terms of biological role, catalyzes carboxymethyl transfer from carboxy-S-adenosyl-L-methionine (Cx-SAM) to 5-hydroxyuridine (ho5U) to form 5-carboxymethoxyuridine (cmo5U) at position 34 in tRNAs. The protein is tRNA U34 carboxymethyltransferase of Pseudomonas fluorescens (strain ATCC BAA-477 / NRRL B-23932 / Pf-5).